A 371-amino-acid polypeptide reads, in one-letter code: MQPIWAVGLMTGTVLDGNIDVALLKTDGETIAEFGAYALKPYPRWIRDLLEQAQAEARVWNFEGAEPAIFAEAEEALTRAQSAAVRELVEESGLSMADIGVVGFHGQTVLHRAPQAGRLGDTRQLGDGRLMSQLLATKVAYDFRTADIRAGGQGAPLAAVYHAALLRSADASGNTAILNLGGVGNITWWDGDDALVAFDTGPANAPINDFMKKRGLGEMDRDGALAAKGKVDEDRLAELLKHPYLIAPYPKSLDRFDFTEMMADGLNEENGAATLTAFTTSAVGKALDILPRRPKRLAVSGGGRRNPTMMHMLVERAEVELVPVEALGWRGDAVEAECFAFLAVRVLRGLPISFPSTTGVPEPMTGGELVG.

Residue 12-20 (GTVLDGNID) coordinates ATP.

This sequence belongs to the anhydro-N-acetylmuramic acid kinase family.

The catalysed reaction is 1,6-anhydro-N-acetyl-beta-muramate + ATP + H2O = N-acetyl-D-muramate 6-phosphate + ADP + H(+). It functions in the pathway amino-sugar metabolism; 1,6-anhydro-N-acetylmuramate degradation. The protein operates within cell wall biogenesis; peptidoglycan recycling. Catalyzes the specific phosphorylation of 1,6-anhydro-N-acetylmuramic acid (anhMurNAc) with the simultaneous cleavage of the 1,6-anhydro ring, generating MurNAc-6-P. Is required for the utilization of anhMurNAc either imported from the medium or derived from its own cell wall murein, and thus plays a role in cell wall recycling. This Brucella anthropi (strain ATCC 49188 / DSM 6882 / CCUG 24695 / JCM 21032 / LMG 3331 / NBRC 15819 / NCTC 12168 / Alc 37) (Ochrobactrum anthropi) protein is Anhydro-N-acetylmuramic acid kinase.